A 308-amino-acid polypeptide reads, in one-letter code: Mitochondrial import receptor subunit TOM40B (308 aa).

A disordered region spans residues 1 to 29; sequence MGNTLGLAPMGTLPRRSPRREEPLPNPGS. Positions 281–308 are required for mitochondrial targeting; it reads PLPVTLALGAFLNHWRNRFHCGFSITVG.

Belongs to the Tom40 family. Forms part of the preprotein translocase of the outer mitochondrial membrane (TOM complex) containing TOMM22, TOMM40, TOMM40L and TOMM70. Interacts with mitochondrial targeting sequences.

It is found in the mitochondrion outer membrane. In terms of biological role, potential channel-forming protein implicated in import of protein precursors into mitochondria. The chain is Mitochondrial import receptor subunit TOM40B (TOMM40L) from Homo sapiens (Human).